The sequence spans 478 residues: Cytochrome c-552 (478 aa).

The first 26 residues, methionine 1–alanine 26, serve as a signal peptide directing secretion. Histidine 94 provides a ligand contact to heme c. Heme-binding residues include cysteine 122, cysteine 125, and lysine 126. The heme c site is built by cysteine 160, cysteine 163, histidine 164, cysteine 209, cysteine 212, and histidine 213. The Ca(2+) site is built by glutamate 215, tyrosine 216, lysine 261, and glutamine 263. Tyrosine 216 contributes to the substrate binding site. A substrate-binding site is contributed by histidine 264. Heme c-binding residues include histidine 275, cysteine 282, cysteine 285, histidine 286, histidine 301, cysteine 314, cysteine 317, histidine 318, and histidine 393.

Belongs to the cytochrome c-552 family. Requires Ca(2+) as cofactor. Heme c serves as cofactor.

The protein localises to the periplasm. It catalyses the reaction 6 Fe(III)-[cytochrome c] + NH4(+) + 2 H2O = 6 Fe(II)-[cytochrome c] + nitrite + 8 H(+). It participates in nitrogen metabolism; nitrate reduction (assimilation). Functionally, catalyzes the reduction of nitrite to ammonia, consuming six electrons in the process. In Salmonella gallinarum (strain 287/91 / NCTC 13346), this protein is Cytochrome c-552.